A 164-amino-acid chain; its full sequence is Glutaredoxin-2, mitochondrial (164 aa).

A mitochondrion-targeting transit peptide spans 1-19 (MIWRRAALAGTRLVWSRSG). The residue at position 20 (serine 20) is a Phosphoserine. Residues 57-157 (VNQIQETISD…PLVHQCYLKK (101 aa)) form the Glutaredoxin domain. Cysteine 68 contributes to the [2Fe-2S] cluster binding site. Glutathione is bound at residue lysine 74. S-glutathionyl cysteine; alternate is present on cysteine 77. Cysteine 77 and cysteine 80 are joined by a disulfide. Glutathione contacts are provided by glutamine 109 and valine 121. Cysteine 153 serves as a coordination point for [2Fe-2S] cluster.

The protein belongs to the glutaredoxin family. Monomer; active form. Homodimer; inactive form. The homodimer is probably linked by 1 2Fe-2S cluster. As to expression, widely expressed. Expressed in brain, heart, skeletal muscle, colon, thymus, spleen, kidney, liver, small intestine, placenta and lung. Not expressed in peripheral blood leukocytes.

It localises to the mitochondrion. Its subcellular location is the nucleus. With respect to regulation, the 2Fe-2S present in the homodimer leads to inactivation of the enzyme. The 2Fe-2S may serve as a redox sensor: the presence of one-electron oxidants or reductants leading to the loss of the 2Fe-2S cluster, subsequent monomerization and activation of the enzyme. Unlike other glutaredoxins, it is not inhibited by oxidation of structural Cys residues. Glutathione-dependent oxidoreductase that facilitates the maintenance of mitochondrial redox homeostasis upon induction of apoptosis by oxidative stress. Involved in response to hydrogen peroxide and regulation of apoptosis caused by oxidative stress. Acts as a very efficient catalyst of monothiol reactions because of its high affinity for protein glutathione-mixed disulfides. Can receive electrons not only from glutathione (GSH), but also from thioredoxin reductase supporting both monothiol and dithiol reactions. Efficiently catalyzes both glutathionylation and deglutathionylation of mitochondrial complex I, which in turn regulates the superoxide production by the complex. Overexpression decreases the susceptibility to apoptosis and prevents loss of cardiolipin and cytochrome c release. In Homo sapiens (Human), this protein is Glutaredoxin-2, mitochondrial (GLRX2).